The following is a 649-amino-acid chain: MDVKTYPVLEAAKNRTLVDNATYLKWYEESVADPEKFWGEHGKRIEWFEPYTTVKNTSFDGNVSIKWFEDGLTNVSYNCIDRHLKTHGEKTAIIWEGDNPYIDKRITYNELYDKVCRLANVLKKHGVEKGDRVTIYMPMVPEAAYAMLACARIGAIHSVVFGGFSPEALAGRIVDCESTFVITCDEGLRGGKPVPLKENTEKAIDIAARQHVMVNKVLVVRRTGGKVPWAPGRDVWYHQEIATVEPHCPPEKMRAEDPLFILYTSGSTGKPKGVLHTTGGYLVYASMTHQYVFDYHDGDIYWCTADVGWVTGHSYIVYGPLANAATTLMFEGVPNFPDAGRFWEVIDKHKVNIFYTAPTAIRSLMGAGDDFVNRSSRSSLRLLGTVGEPINPEAWEWYYHVVGAERSPIVDTWWQTETGGILITPLPGATDLKPGSATRPFFGVKPQIVDNEGNVIDGPADGNLCITDSWPGQMRTVYGDHERFIQTYFSTYKGKYFTGDGCRRDEDGYYWITGRVDDVLNVSGHRLGTAEVESALVSHHLVSEAAVVGYPHPIKGQGIYCYVSLMAGEVGSDELRQELVKHVRSEIGPIATPDKIQFAPGLPKTRSGKIMRRILRKIAEDDFGSLGDTSTLADPAVVDDLIANRQNRG.

Residues 189–192 (RGGK), Thr311, and Asn335 each bind CoA. ATP-binding positions include 387–389 (GEP), 411–416 (DTWWQT), Asp500, and Arg515. Ser523 contributes to the CoA binding site. Arg526 provides a ligand contact to ATP. The Mg(2+) site is built by Val537, His539, and Val542. CoA is bound at residue Arg584. Position 609 is an N6-acetyllysine (Lys609).

Belongs to the ATP-dependent AMP-binding enzyme family. Mg(2+) serves as cofactor. In terms of processing, acetylated. Deacetylation by the SIR2-homolog deacetylase activates the enzyme.

It catalyses the reaction acetate + ATP + CoA = acetyl-CoA + AMP + diphosphate. Catalyzes the conversion of acetate into acetyl-CoA (AcCoA), an essential intermediate at the junction of anabolic and catabolic pathways. AcsA undergoes a two-step reaction. In the first half reaction, AcsA combines acetate with ATP to form acetyl-adenylate (AcAMP) intermediate. In the second half reaction, it can then transfer the acetyl group from AcAMP to the sulfhydryl group of CoA, forming the product AcCoA. The protein is Acetyl-coenzyme A synthetase of Sinorhizobium fredii (strain NBRC 101917 / NGR234).